A 110-amino-acid chain; its full sequence is Insulin (110 aa).

An N-terminal signal peptide occupies residues 1 to 24; the sequence is MALWMRLLPLLVLLALWGPDPASA. Intrachain disulfides connect cysteine 31-cysteine 96, cysteine 43-cysteine 109, and cysteine 95-cysteine 100. The propeptide at 57 to 87 is c peptide; sequence EAEDLQVGQVELGGGPGAGSLQPLALEGSLQ.

Belongs to the insulin family. In terms of assembly, heterodimer of a B chain and an A chain linked by two disulfide bonds.

It localises to the secreted. Functionally, insulin decreases blood glucose concentration. It increases cell permeability to monosaccharides, amino acids and fatty acids. It accelerates glycolysis, the pentose phosphate cycle, and glycogen synthesis in liver. The protein is Insulin (INS) of Pan troglodytes (Chimpanzee).